The sequence spans 237 residues: Protein lin-31 (237 aa).

A DNA-binding region (fork-head) is located at residues 12–103 (QKPPYSYIWL…SGMFENGSCL (92 aa)). Disordered stretches follow at residues 110 to 141 (RARG…LLPE) and 195 to 237 (NFES…ILSS). Composition is skewed to low complexity over residues 206–216 (SEISGSGSSSS) and 227–237 (SSFSIESILSS).

Its subcellular location is the nucleus. Its function is as follows. Lin-31 regulates how vulval precursor cells choose their fate. It helps specify three alternative cell fates in vulval development. In Caenorhabditis elegans, this protein is Protein lin-31 (lin-31).